The primary structure comprises 110 residues: Large ribosomal subunit protein uL24 (110 aa).

It belongs to the universal ribosomal protein uL24 family. Part of the 50S ribosomal subunit.

One of two assembly initiator proteins, it binds directly to the 5'-end of the 23S rRNA, where it nucleates assembly of the 50S subunit. Its function is as follows. One of the proteins that surrounds the polypeptide exit tunnel on the outside of the subunit. This Frankia alni (strain DSM 45986 / CECT 9034 / ACN14a) protein is Large ribosomal subunit protein uL24.